A 245-amino-acid polypeptide reads, in one-letter code: uncharacterized protein (245 aa).

2 helical membrane-spanning segments follow: residues 29-51 and 61-83; these read LVVL…RIGM and TILF…LMLH.

It is found in the cell membrane. This is an uncharacterized protein from Treponema pallidum (strain Nichols).